A 337-amino-acid chain; its full sequence is Inositol 2-dehydrogenase (337 aa).

This sequence belongs to the Gfo/Idh/MocA family. As to quaternary structure, homotetramer.

The catalysed reaction is myo-inositol + NAD(+) = scyllo-inosose + NADH + H(+). Its function is as follows. Involved in the oxidation of myo-inositol (MI) to 2-keto-myo-inositol (2KMI or 2-inosose). The polypeptide is Inositol 2-dehydrogenase (Burkholderia vietnamiensis (strain G4 / LMG 22486) (Burkholderia cepacia (strain R1808))).